The primary structure comprises 600 residues: Proton channel OTOP1 (600 aa).

The tract at residues 1 to 50 (MPGGPGAPSSPAASSGSSRAAPSGIAACPLSPPPLARGSPQASGPRRGAS) is disordered. The Cytoplasmic portion of the chain corresponds to 1 to 56 (MPGGPGAPSSPAASSGSSRAAPSGIAACPLSPPPLARGSPQASGPRRGASVPQKLA). Residues 7–27 (APSSPAASSGSSRAAPSGIAA) are compositionally biased toward low complexity. Residues 57 to 78 (ETLSSQYGLNVFVAGLLFLLAW) traverse the membrane as a helical segment. Over 79-86 (AVHATGVG) the chain is Extracellular. A helical membrane pass occupies residues 87–110 (KSDLLCVLTALMLLQLLWMLWYVG). Topologically, residues 111 to 128 (RSYMQRRLIRPKDTHAGA) are cytoplasmic. A helical membrane pass occupies residues 129 to 151 (RWLRGSITLFAFITVVLGCLKVA). At 152-161 (YFIGFSECLS) the chain is on the extracellular side. The helical transmembrane segment at 162–186 (ATEGVFPVTHAVHTLLQVYFLWGHA) threads the bilayer. Residues 187–194 (KDIIMSFK) lie on the Cytoplasmic side of the membrane. Residues 195 to 217 (TLERFGVIHSVFTNLLLWANSVL) traverse the membrane as a helical segment. The Extracellular portion of the chain corresponds to 218–262 (NESKHQLNEHKERLITLGFGNITIVLDDHTPQCNCTPPALCSALS). The helical transmembrane segment at 263–288 (HGIYYLYPFNIEYQILASTMLYVLWK) threads the bilayer. Topologically, residues 289-309 (NIGRRVDSSQHQKMQCRFDGV) are cytoplasmic. A helical transmembrane segment spans residues 310 to 332 (LVGSVLGLTVLAATIAVVVVYMI). The Extracellular segment spans residues 333–342 (HIGRSKSKSE). A helical membrane pass occupies residues 343-368 (SALIMFYLYAITVLLLMGAAGLVGSW). The Cytoplasmic portion of the chain corresponds to 369-386 (IYRVDEKSLDESKNPARK). A helical membrane pass occupies residues 387-411 (LDVDLLVATGSGSWLLSWGSILAIA). Residues 412–421 (CAETRPPYTW) are Extracellular-facing. The chain crosses the membrane as a helical span at residues 422-442 (YNLPYSVLVIVEKYVQNIFII). Residues 443–532 (ESVHLEPEGV…QGGMKRRLLR (90 aa)) are Cytoplasmic-facing. Residues 533–551 (NITAFLFLCNISLWIPPAF) traverse the membrane as a helical segment. Topologically, residues 552–569 (GCRPEYDNGLEEIVFGFE) are extracellular. A helical transmembrane segment spans residues 570–593 (PWIIVVNLAMPFSIFYRMHAAAAL). Residues 594-600 (FEVYCKI) are Cytoplasmic-facing.

This sequence belongs to the otopetrin family. In terms of assembly, homodimer. Interacts with STAT1, independently of STAT1 phosphorylation status. Expressed in thymus, heart, kidney, skin, vestibular system of the inner ear, sour taste cells, heart, uterus, dorsal root ganglion, adrenal gland, lactating mammary gland and stimulated mast cells. In the inner ear, expressed in the supporting cells in extrastriolar regions of the saccule and in the utricle, but not in the cochlea. Expressed in brown adipose tissue. Expressed in epididymal white adipose tissue (eWAT), as well as in inguinal fat, in obese animals, but hardly detectable in eWAT from lean mice. Expressed in acid-sensing taste receptor cells (PKD2L1-positive cells), but not in other types of taste cells (at protein level).

Its subcellular location is the cell membrane. The protein resides in the cell projection. The protein localises to the microvillus. It carries out the reaction H(+)(in) = H(+)(out). Its activity is regulated as follows. Activated by both acid and alkali, with proton influx in response to extracellular acid and proton efflux during alkali stimulation. Inhibited by Zn(2+); this inhibition is thought to be pH-sensitive. Currents evoked in response to mild acid (pH 6.0) stimulus may also be mildly potentiated by exposure to Zn(2+). Activated by NH(4)Cl. In terms of biological role, proton-selective ion channel. Biphasically modulated by acid and alkali, mediating proton influx and efflux in response to extracellular acid and base stimulation, respectively. Sour taste receptor, which carries inward currents in response to extracellular acidification. Sensor for ammonium chloride (NH(4)Cl) in taste receptor cells. NH(4)Cl acts by increasing the intracellular pH, thereby generating a driving force for proton entry through OTOP1 channel. Might also participate in alkaline sensation. Plays a role in the regulation of Ca(2+) flux in response to purigenic (ATP, ADP and UDP) stimuli, leading to increase in cytosolic Ca(2+) due to influx of extracellular calcium. May play this role by inhibiting P2Y purinoceptor-mediated Ca(2+) release in a Ca(2+)-dependent manner and promote an influx of Ca(2+) in response to ATP. Through this mechanism and possibly others, plays a role in the formation and function of calcium carbonate-based structures in the vestibular system of the inner ear, called otoconia, that sense gravity and linear acceleration. In obesity, may attenuate adipose tissue inflammation, through the negative regulation of IFNG signaling, hence may play an adaptive role in the maintainance of metabolic homeostasis. Following alkali activation, may also be permeable Na(+), K(+), Cs(+) and Li(+). This Mus musculus (Mouse) protein is Proton channel OTOP1.